We begin with the raw amino-acid sequence, 535 residues long: Light-independent protochlorophyllide reductase subunit B (535 aa).

A [4Fe-4S] cluster-binding site is contributed by Asp-36. Asp-292 functions as the Proton donor in the catalytic mechanism. A substrate-binding site is contributed by 428 to 429 (GL). The interval 446–483 (DEASPSESAPHASNGHEDVAGGSTAQSVPSHAATEGDG) is disordered.

This sequence belongs to the ChlB/BchB/BchZ family. In terms of assembly, protochlorophyllide reductase is composed of three subunits; BchL, BchN and BchB. Forms a heterotetramer of two BchB and two BchN subunits. [4Fe-4S] cluster is required as a cofactor.

It carries out the reaction chlorophyllide a + oxidized 2[4Fe-4S]-[ferredoxin] + 2 ADP + 2 phosphate = protochlorophyllide a + reduced 2[4Fe-4S]-[ferredoxin] + 2 ATP + 2 H2O. The protein operates within porphyrin-containing compound metabolism; bacteriochlorophyll biosynthesis (light-independent). Functionally, component of the dark-operative protochlorophyllide reductase (DPOR) that uses Mg-ATP and reduced ferredoxin to reduce ring D of protochlorophyllide (Pchlide) to form chlorophyllide a (Chlide). This reaction is light-independent. The NB-protein (BchN-BchB) is the catalytic component of the complex. This is Light-independent protochlorophyllide reductase subunit B from Chlorobium limicola (strain DSM 245 / NBRC 103803 / 6330).